The chain runs to 253 residues: MDSVRPRAPWAPPPDPASLDSPTCEPGLMAGTQLFRFREEPVPGGNRAVLEVRVPQVLHVQYGMYVWPCAVVLAQYLWFHRRSLPGKAVLEVGAGVSLPGILAAKCGAKVILSDSSEFPHCLDICRQSCQMNNLPQVEVVGLTWGHISKDILSLPPQDIILGSDVFFEPEDFESILATVYFLMQKNPKVQFWSTYQVRSADWSLEGLLYKWDMKCVHIPLESFDADKEDIAESTLPGRHTVEMLIISFAKDSF.

Positions 1–23 (MDSVRPRAPWAPPPDPASLDSPT) are disordered.

The protein belongs to the methyltransferase superfamily. METTL23 family. Interacts with HSPA5, HSP90B1, TUBULIN, UGGT1 and UGGT2. Interacts with TET3. Interacts with STPG4. As to expression, ubiquitously expressed.

Its subcellular location is the nucleus. It localises to the cytoplasm. It carries out the reaction L-arginyl-[protein] + 2 S-adenosyl-L-methionine = N(omega),N(omega)-dimethyl-L-arginyl-[protein] + 2 S-adenosyl-L-homocysteine + 2 H(+). In terms of biological role, histone methyltransferase that dimethylates histone H3 at 'Arg-17', forming asymmetric dimethylarginine (H3R17me2a), leading to activate transcription via chromatin remodeling. Maternal factor involved in epigenetic chromatin reprogramming of the paternal genome in the zygote: mediates H3R17me2a, promoting histone H3.3 incorporation in the male pronucleus, leading to TET3 recruitment and subsequent DNA demethylation. This is Histone-arginine methyltransferase METTL23 from Mus musculus (Mouse).